The chain runs to 128 residues: Large ribosomal subunit protein bL17 (128 aa).

Belongs to the bacterial ribosomal protein bL17 family. As to quaternary structure, part of the 50S ribosomal subunit. Contacts protein L32.

The chain is Large ribosomal subunit protein bL17 from Histophilus somni (strain 129Pt) (Haemophilus somnus).